The sequence spans 206 residues: ATP-dependent Clp protease proteolytic subunit (206 aa).

The Nucleophile role is filled by serine 101. The active site involves histidine 126.

Belongs to the peptidase S14 family. Component of the chloroplastic Clp protease core complex.

Its subcellular location is the plastid. The protein localises to the chloroplast stroma. The catalysed reaction is Hydrolysis of proteins to small peptides in the presence of ATP and magnesium. alpha-casein is the usual test substrate. In the absence of ATP, only oligopeptides shorter than five residues are hydrolyzed (such as succinyl-Leu-Tyr-|-NHMec, and Leu-Tyr-Leu-|-Tyr-Trp, in which cleavage of the -Tyr-|-Leu- and -Tyr-|-Trp bonds also occurs).. Its function is as follows. Cleaves peptides in various proteins in a process that requires ATP hydrolysis. Has a chymotrypsin-like activity. Plays a major role in the degradation of misfolded proteins. This is ATP-dependent Clp protease proteolytic subunit from Solanum lycopersicum (Tomato).